The following is a 118-amino-acid chain: Small ribosomal subunit protein bTHXc (118 aa).

The transit peptide at 1–55 (MASLILGAPPRVTVALPSSRLSSSHSETAGVSLSCFTHQFSLSTSSSSSIPLVYC) directs the protein to the chloroplast. A disordered region spans residues 61 to 118 (KTAKGKRFNHSFGNARPRNKSKGRGPERVPVPPAPPRKDKFENDEKIKIDIDESLFSN). Positions 96–111 (PRKDKFENDEKIKIDI) are enriched in basic and acidic residues. A Phosphoserine modification is found at S117.

Belongs to the bacterial ribosomal protein bTHX family. In terms of assembly, part of the 30S ribosomal subunit.

Its subcellular location is the plastid. The protein localises to the chloroplast. In Arabidopsis thaliana (Mouse-ear cress), this protein is Small ribosomal subunit protein bTHXc (RPS31).